Consider the following 495-residue polypeptide: Germacrene A acid 8-beta-hydroxylase (495 aa).

Residues 3–23 form a helical; Signal-anchor for type II membrane protein membrane-spanning segment; that stretch reads PFTTFSLVASSLILLICWALV. A glycan (N-linked (GlcNAc...) asparagine) is linked at Asn-103. Cys-433 provides a ligand contact to heme.

The protein belongs to the cytochrome P450 family. Heme serves as cofactor. As to expression, mostly expressed in leaves and flowers, and, to a lower extent, in roots and stems.

The protein localises to the membrane. It catalyses the reaction germacra-1(10),4,11(13)-trien-12-oate + reduced [NADPH--hemoprotein reductase] + O2 = 8beta-hydroxygermacra-1(10),4,11(13)-trien-12-oate + oxidized [NADPH--hemoprotein reductase] + H2O + H(+). The enzyme catalyses germacra-1(10),4,11(13)-trien-12-oate + reduced [NADPH--hemoprotein reductase] + O2 = 8-epi-inunolide + oxidized [NADPH--hemoprotein reductase] + 2 H2O. The catalysed reaction is germacra-1(10),4,11(13)-trien-12-oate + reduced [NADPH--hemoprotein reductase] + O2 = 8alpha-hydroxygermacra-1(10),4,11(13)-trien-12-oate + oxidized [NADPH--hemoprotein reductase] + H2O + H(+). The protein operates within secondary metabolite biosynthesis; terpenoid biosynthesis. Involved in the biosynthesis of germacrene-derived sesquiterpene lactones. Hydroxylates germacrene A acid to 8-beta-hydroxy-germacrene A and 8-alpha-hydroxy-germacrene A acids. Unlike 8-alpha-hydroxy-germacrene A acid with is spontaneously converted into inunolide (12, 8-alpha), 8-beta-hydroxy-germacrene A cannot undergo spontaneous lactonization. This is Germacrene A acid 8-beta-hydroxylase from Inula hupehensis (Inula helianthus-aquatilis subsp. hupehensis).